Consider the following 328-residue polypeptide: Interferon regulatory factor 1 (328 aa).

Residues 5 to 113 (RMRMRPWLEM…SAVRVYRMLP (109 aa)) constitute a DNA-binding region (IRF tryptophan pentad repeat). Position 78 is an N6-acetyllysine (K78). Residues 92–164 (EEVKDQSRNK…STLPDDHSSY (73 aa)) form a disordered region. Positions 141-157 (GDSSPDTLSDGLSSSTL) are enriched in low complexity. Glycyl lysine isopeptide (Lys-Gly) (interchain with G-Cter in SUMO) cross-links involve residues K276 and K300.

The protein belongs to the IRF family. As to quaternary structure, monomer. Homodimer. Interacts with EP300. Interacts with MYD88. Interacts with PIAS3. Interacts with SPOP. Phosphorylated by CK2 and this positively regulates its activity. In terms of processing, sumoylation represses the transcriptional activity and displays enhanced resistance to protein degradation. Sumoylated by UBE2I/UBC9 and SUMO1. Inactivates the tumor suppressor activity. Elevated levels in tumor cells. Major site is Lys-276. Sumoylation is enhanced by PIAS3. Desumoylated by SENP1 in tumor cells and appears to compete with ubiquitination on C-terminal sites. Post-translationally, ubiquitinated in a SPOP-depedent manner. Appears to compete with sumoylation on C-terminal sites.

It is found in the nucleus. Its subcellular location is the cytoplasm. With respect to regulation, activated by MYD88. In terms of biological role, transcriptional regulator which displays a remarkable functional diversity in the regulation of cellular responses. Regulates transcription of IFN and IFN-inducible genes, host response to viral and bacterial infections, regulation of many genes expressed during hematopoiesis, inflammation, immune responses and cell proliferation and differentiation, regulation of the cell cycle and induction of growth arrest and programmed cell death following DNA damage. Stimulates both innate and acquired immune responses through the activation of specific target genes and can act as a transcriptional activator and repressor regulating target genes by binding to an interferon-stimulated response element (ISRE) in their promoters. Has an essentail role in IFNG-dependent immunity to mycobacteria. Binds to a consensus sequence in gene promoters. Its target genes for transcriptional activation activity include: genes involved in anti-viral response, such as IFN-alpha/beta, RIGI, TNFSF10/TRAIL, ZBP1, OAS1/2, PIAS1/GBP, EIF2AK2/PKR and RSAD2/viperin; antibacterial response, such as GBP2, GBP5 and NOS2/INOS; anti-proliferative response, such as p53/TP53, LOX and CDKN1A; apoptosis, such as BBC3/PUMA, CASP1, CASP7 and CASP8; immune response, such as IL7, IL12A/B and IL15, PTGS2/COX2 and CYBB; DNA damage responses and DNA repair, such as POLQ/POLH; MHC class I expression, such as TAP1, PSMB9/LMP2, PSME1/PA28A, PSME2/PA28B and B2M and MHC class II expression, such as CIITA; metabolic enzymes, such as ACOD1/IRG1. Represses genes involved in anti-proliferative response, such as BIRC5/survivin, CCNB1, CCNE1, CDK1, CDK2 and CDK4 and in immune response, such as FOXP3, IL4, ANXA2 and TLR4. Stimulates p53/TP53-dependent transcription through enhanced recruitment of EP300 leading to increased acetylation of p53/TP53. Plays an important role in immune response directly affecting NK maturation and activity, macrophage production of IL12, Th1 development and maturation of CD8+ T-cells. Also implicated in the differentiation and maturation of dendritic cells and in the suppression of regulatory T (Treg) cells development. Acts as a tumor suppressor and plays a role not only in antagonism of tumor cell growth but also in stimulating an immune response against tumor cells. The sequence is that of Interferon regulatory factor 1 (Irf1) from Rattus norvegicus (Rat).